We begin with the raw amino-acid sequence, 210 residues long: Ras-related protein Rab-2-B (210 aa).

13–21 (GDTGVGKSC) provides a ligand contact to GTP. Residues 35–43 (HDLTIGVEF) carry the Effector region motif. Residues 61–65 (DTAGQ), 119–122 (NKCD), and 149–151 (SAK) contribute to the GTP site. S-geranylgeranyl cysteine attachment occurs at residues cysteine 208 and cysteine 209.

It belongs to the small GTPase superfamily. Rab family.

It localises to the endoplasmic reticulum membrane. The protein localises to the golgi apparatus membrane. Functionally, protein transport. Probably involved in vesicular traffic. This chain is Ras-related protein Rab-2-B (RAB2B), found in Zea mays (Maize).